The following is a 48-amino-acid chain: Entericidin B (48 aa).

An N-terminal signal peptide occupies residues 1–21 (MVKKTIAAIFSVLVLSSVLTA). A lipid anchor (N-palmitoyl cysteine) is attached at Cys22. A lipid anchor (S-diacylglycerol cysteine) is attached at Cys22.

It belongs to the EcnA/EcnB lipoprotein family.

Its subcellular location is the cell membrane. In terms of biological role, plays a role in the bacteriolysis. Is activated under conditions of high osmolarity by the factor sigma S. Entericidin A functions as an antidote. The chain is Entericidin B (ecnB) from Citrobacter freundii.